The chain runs to 441 residues: UPF0761 membrane protein Clim_1521 (441 aa).

Transmembrane regions (helical) follow at residues isoleucine 54–alanine 74, threonine 122–isoleucine 142, alanine 161–glycine 181, leucine 203–valine 223, alanine 233–phenylalanine 253, and glycine 266–leucine 286.

Belongs to the UPF0761 family.

Its subcellular location is the cell inner membrane. In Chlorobium limicola (strain DSM 245 / NBRC 103803 / 6330), this protein is UPF0761 membrane protein Clim_1521.